The following is a 249-amino-acid chain: uncharacterized protein (249 aa).

The protein resides in the cytoplasm. It localises to the nucleus. This is an uncharacterized protein from Schizosaccharomyces pombe (strain 972 / ATCC 24843) (Fission yeast).